Here is a 443-residue protein sequence, read N- to C-terminus: Nuclear distribution protein nudF (443 aa).

Residues 9-41 (QAEELHKSIIAYLSSINASRSCEVLREELQVDS) form the LisH domain. Residues 60-87 (TGIARLQKKILDLESKLAGLQTELDTIS) adopt a coiled-coil conformation. WD repeat units lie at residues 111–152 (SHRD…RTLK), 154–194 (HMRP…ANVR), 198–238 (GHDH…CVKV), 241–280 (SQGSWINDVSPSFDGKWLVTGGRDQAAMVWEVASAKSVAS), 283–343 (GHEN…IKTL), 345–384 (GHDNWVRGLLFHPGGKYLISVADDKTIRCWDLSQGGRLVK), 388–427 (AHGHFVSCIRWGPVPVSDVPVETSESTKSSKSDSVKPGFQ), and 429–443 (VIATGSADSSVRIFT).

Belongs to the WD repeat LIS1/nudF family. As to quaternary structure, self-associates. Interacts with nudE and dynein.

It is found in the cytoplasm. It localises to the cytoskeleton. The protein localises to the spindle pole. Its function is as follows. Positively regulates the activity of the minus-end directed microtubule motor protein dynein. May enhance dynein-mediated microtubule sliding by targeting dynein to the microtubule plus end. Required for nuclear migration during vegetative growth as well as development. Required for retrograde early endosome (EE) transport from the hyphal tip. Required for localization of dynein to the mitotic spindle poles. Recruits additional proteins to the dynein complex at SPBs. In Aspergillus niger (strain ATCC MYA-4892 / CBS 513.88 / FGSC A1513), this protein is Nuclear distribution protein nudF.